The following is a 137-amino-acid chain: Large ribosomal subunit protein uL16 (137 aa).

Belongs to the universal ribosomal protein uL16 family. As to quaternary structure, part of the 50S ribosomal subunit.

Functionally, binds 23S rRNA and is also seen to make contacts with the A and possibly P site tRNAs. The protein is Large ribosomal subunit protein uL16 of Hydrogenovibrio crunogenus (strain DSM 25203 / XCL-2) (Thiomicrospira crunogena).